The sequence spans 367 residues: Phospho-N-acetylmuramoyl-pentapeptide-transferase (367 aa).

10 helical membrane-spanning segments follow: residues 30–50 (AAAI…IALL), 71–91 (LPTM…LLWA), 94–114 (TDPH…IGFI), 138–158 (ISLG…SVLM), 169–189 (LTID…TALS), 200–220 (GLAA…AYLA), 237–257 (GGEI…FLWF), 264–284 (IIMG…TALL), 289–309 (LLLP…SLQV), and 344–364 (KIVI…LMTL).

Belongs to the glycosyltransferase 4 family. MraY subfamily. The cofactor is Mg(2+).

The protein localises to the cell inner membrane. The enzyme catalyses UDP-N-acetyl-alpha-D-muramoyl-L-alanyl-gamma-D-glutamyl-meso-2,6-diaminopimeloyl-D-alanyl-D-alanine + di-trans,octa-cis-undecaprenyl phosphate = di-trans,octa-cis-undecaprenyl diphospho-N-acetyl-alpha-D-muramoyl-L-alanyl-D-glutamyl-meso-2,6-diaminopimeloyl-D-alanyl-D-alanine + UMP. The protein operates within cell wall biogenesis; peptidoglycan biosynthesis. In terms of biological role, catalyzes the initial step of the lipid cycle reactions in the biosynthesis of the cell wall peptidoglycan: transfers peptidoglycan precursor phospho-MurNAc-pentapeptide from UDP-MurNAc-pentapeptide onto the lipid carrier undecaprenyl phosphate, yielding undecaprenyl-pyrophosphoryl-MurNAc-pentapeptide, known as lipid I. The chain is Phospho-N-acetylmuramoyl-pentapeptide-transferase from Chlorobium phaeovibrioides (strain DSM 265 / 1930) (Prosthecochloris vibrioformis (strain DSM 265)).